Consider the following 447-residue polypeptide: Elongation factor 1-alpha (447 aa).

In terms of domain architecture, tr-type G spans 5–230; it reads KTHINIVVIG…DQINEPKRPS (226 aa). Residues 14 to 21 form a G1 region; it reads GHVDSGKS. Residue 14–21 participates in GTP binding; that stretch reads GHVDSGKS. Lysine 55 is subject to N6,N6-dimethyllysine. A G2 region spans residues 70–74; it reads GITID. At lysine 79 the chain carries N6,N6,N6-trimethyllysine. Residues 91–94 are G3; sequence DAPG. Residues 91 to 95 and 153 to 156 each bind GTP; these read DAPGH and NKMD. The segment at 153–156 is G4; that stretch reads NKMD. Lysine 187 carries the N6,N6,N6-trimethyllysine modification. Positions 194–196 are G5; that stretch reads SGF. Position 261 is an N6-methyllysine (lysine 261). 5-glutamyl glycerylphosphorylethanolamine is present on glutamate 289. An N6,N6,N6-trimethyllysine modification is found at lysine 306. 5-glutamyl glycerylphosphorylethanolamine is present on glutamate 362. The residue at position 396 (lysine 396) is an N6,N6,N6-trimethyllysine.

This sequence belongs to the TRAFAC class translation factor GTPase superfamily. Classic translation factor GTPase family. EF-Tu/EF-1A subfamily.

The protein resides in the cytoplasm. This protein promotes the GTP-dependent binding of aminoacyl-tRNA to the A-site of ribosomes during protein biosynthesis. The sequence is that of Elongation factor 1-alpha (REFA1) from Oryza sativa subsp. japonica (Rice).